The sequence spans 271 residues: Delta(3,5)-Delta(2,4)-dienoyl-CoA isomerase (271 aa).

Residues 62–66 (SGGKF) and Leu120 each bind substrate. Glu152 serves as the catalytic Proton donor/acceptor. The Peroxisome targeting signal (PTS1) signature appears at 269-271 (HKL).

The protein belongs to the enoyl-CoA hydratase/isomerase family. Interacts with ECI1.

Its subcellular location is the peroxisome. The enzyme catalyses a (3E,5Z)-dienoyl-CoA = a (2E,4E)-(5,6-saturated)-dienoyl-CoA. It functions in the pathway lipid metabolism; fatty acid beta-oxidation. Its function is as follows. Peroxisomal di-isomerase that is involved in fatty acid metabolism enzyme by converting 3,5-dienoyl-CoAs to the corresponding 2,4-dienoyl-CoAs. Required for ECI1 to be located to the peroxisome. The protein is Delta(3,5)-Delta(2,4)-dienoyl-CoA isomerase of Saccharomyces cerevisiae (strain ATCC 204508 / S288c) (Baker's yeast).